We begin with the raw amino-acid sequence, 400 residues long: NADH-quinone oxidoreductase subunit D (400 aa).

Belongs to the complex I 49 kDa subunit family. NDH-1 is composed of 14 different subunits. Subunits NuoB, C, D, E, F, and G constitute the peripheral sector of the complex.

It is found in the cell inner membrane. It catalyses the reaction a quinone + NADH + 5 H(+)(in) = a quinol + NAD(+) + 4 H(+)(out). Its function is as follows. NDH-1 shuttles electrons from NADH, via FMN and iron-sulfur (Fe-S) centers, to quinones in the respiratory chain. The immediate electron acceptor for the enzyme in this species is believed to be ubiquinone. Couples the redox reaction to proton translocation (for every two electrons transferred, four hydrogen ions are translocated across the cytoplasmic membrane), and thus conserves the redox energy in a proton gradient. The protein is NADH-quinone oxidoreductase subunit D of Granulibacter bethesdensis (strain ATCC BAA-1260 / CGDNIH1).